The primary structure comprises 182 residues: Orotate phosphoribosyltransferase (182 aa).

5-phospho-alpha-D-ribose 1-diphosphate-binding positions include Arg96, Lys97, Lys100, His102, and 122–130; that span reads EDTSTTGGS. Orotate contacts are provided by Thr126 and Arg154.

This sequence belongs to the purine/pyrimidine phosphoribosyltransferase family. PyrE subfamily. In terms of assembly, homodimer. Requires Mg(2+) as cofactor.

The enzyme catalyses orotidine 5'-phosphate + diphosphate = orotate + 5-phospho-alpha-D-ribose 1-diphosphate. The protein operates within pyrimidine metabolism; UMP biosynthesis via de novo pathway; UMP from orotate: step 1/2. Catalyzes the transfer of a ribosyl phosphate group from 5-phosphoribose 1-diphosphate to orotate, leading to the formation of orotidine monophosphate (OMP). In Streptomyces avermitilis (strain ATCC 31267 / DSM 46492 / JCM 5070 / NBRC 14893 / NCIMB 12804 / NRRL 8165 / MA-4680), this protein is Orotate phosphoribosyltransferase.